Consider the following 327-residue polypeptide: Mitochondrial coenzyme A transporter SLC25A42 (327 aa).

3 Solcar repeats span residues 34–120, 132–217, and 227–315; these read KSIL…YKKL, LTPI…LKKL, and PYPF…TQIL. 6 helical membrane passes run 36–56, 92–112, 138–158, 189–209, 233–253, and 296–316; these read ILNS…AVAP, LWRG…IQFC, LLAG…LDLV, LYRG…ISFF, LLFG…LDVV, and VKGP…QILL.

The protein belongs to the mitochondrial carrier (TC 2.A.29) family.

The protein localises to the mitochondrion inner membrane. It catalyses the reaction ADP(out) + CoA(in) = ADP(in) + CoA(out). The catalysed reaction is 3'-dephospho-CoA(in) + ADP(out) = 3'-dephospho-CoA(out) + ADP(in). The enzyme catalyses adenosine 3',5'-bisphosphate(in) + ADP(out) = adenosine 3',5'-bisphosphate(out) + ADP(in). It carries out the reaction AMP(in) + ADP(out) = AMP(out) + ADP(in). It catalyses the reaction dADP(in) + ADP(out) = dADP(out) + ADP(in). The catalysed reaction is ADP(in) + ATP(out) = ADP(out) + ATP(in). Functionally, mitochondrial carrier mediating the transport of coenzyme A (CoA) in mitochondria in exchange for intramitochondrial (deoxy)adenine nucleotides and adenosine 3',5'-diphosphate. This Xenopus tropicalis (Western clawed frog) protein is Mitochondrial coenzyme A transporter SLC25A42 (slc25a42).